Reading from the N-terminus, the 275-residue chain is Ribosomal RNA small subunit methyltransferase A (275 aa).

The S-adenosyl-L-methionine site is built by N21, L23, G48, E69, D94, and N115.

It belongs to the class I-like SAM-binding methyltransferase superfamily. rRNA adenine N(6)-methyltransferase family. RsmA subfamily.

The protein localises to the cytoplasm. The catalysed reaction is adenosine(1518)/adenosine(1519) in 16S rRNA + 4 S-adenosyl-L-methionine = N(6)-dimethyladenosine(1518)/N(6)-dimethyladenosine(1519) in 16S rRNA + 4 S-adenosyl-L-homocysteine + 4 H(+). In terms of biological role, specifically dimethylates two adjacent adenosines (A1518 and A1519) in the loop of a conserved hairpin near the 3'-end of 16S rRNA in the 30S particle. May play a critical role in biogenesis of 30S subunits. This Clostridium botulinum (strain Okra / Type B1) protein is Ribosomal RNA small subunit methyltransferase A.